The primary structure comprises 271 residues: Beta-lactamase (271 aa).

Residue S46 is the Acyl-ester intermediate of the active site. Position 210–212 (210–212 (KTG)) interacts with substrate.

This sequence belongs to the class-A beta-lactamase family. Monomer.

It catalyses the reaction a beta-lactam + H2O = a substituted beta-amino acid. Hydrolyzes broad-spectrum beta-lactam antibiotics. Active against cephalosporins. This Proteus vulgaris protein is Beta-lactamase.